Here is a 421-residue protein sequence, read N- to C-terminus: Periplasmic [Fe] hydrogenase large subunit (421 aa).

4Fe-4S ferredoxin-type domains are found at residues 26–57 (HFVQ…MGEP) and 59–86 (SIPH…EAQS). Positions 35, 38, 41, 45, 66, 69, 72, 76, 179, 234, 378, and 382 each coordinate [4Fe-4S] cluster. Position 382 (Cys382) interacts with Fe(2+).

As to quaternary structure, heterodimer of a large and a small subunit. [4Fe-4S] cluster is required as a cofactor. It depends on Fe(2+) as a cofactor.

Its subcellular location is the periplasm. The enzyme catalyses H2 + 2 oxidized [2Fe-2S]-[ferredoxin] = 2 reduced [2Fe-2S]-[ferredoxin] + 2 H(+). Functionally, may be involved in hydrogen uptake for the reduction of sulfate to hydrogen sulfide in an electron transport chain. Cytochrome c3 is likely to be the physiological electron carrier for the enzyme. This is Periplasmic [Fe] hydrogenase large subunit (hydA) from Nitratidesulfovibrio vulgaris (strain ATCC 29579 / DSM 644 / CCUG 34227 / NCIMB 8303 / VKM B-1760 / Hildenborough) (Desulfovibrio vulgaris).